A 603-amino-acid chain; its full sequence is DNA-directed RNA polymerase subunit beta' N-terminal section (603 aa).

Positions 283, 285, 329, and 332 each coordinate Zn(2+).

Belongs to the RNA polymerase beta' chain family. RpoC1 subfamily. As to quaternary structure, in plastids the minimal PEP RNA polymerase catalytic core is composed of four subunits: alpha, beta, beta', and beta''. When a (nuclear-encoded) sigma factor is associated with the core the holoenzyme is formed, which can initiate transcription. The cofactor is Zn(2+).

It is found in the plastid. It localises to the chloroplast. It carries out the reaction RNA(n) + a ribonucleoside 5'-triphosphate = RNA(n+1) + diphosphate. In terms of biological role, DNA-dependent RNA polymerase catalyzes the transcription of DNA into RNA using the four ribonucleoside triphosphates as substrates. The protein is DNA-directed RNA polymerase subunit beta' N-terminal section (rpoC1A) of Chlamydomonas reinhardtii (Chlamydomonas smithii).